Reading from the N-terminus, the 175-residue chain is UPF0398 protein SPH_0478 (175 aa).

Belongs to the UPF0398 family.

This chain is UPF0398 protein SPH_0478, found in Streptococcus pneumoniae (strain Hungary19A-6).